Here is a 514-residue protein sequence, read N- to C-terminus: Sugar transport protein 11 (514 aa).

The Cytoplasmic portion of the chain corresponds to 1-19 (MAGGAFIDESGHGGDYEGR). The helical transmembrane segment at 20-40 (VTAFVMITCIVAAMGGLLFGY) threads the bilayer. Residues 41–82 (DIGISGGVISMEDFLTKFFPDVLRQMQNKRGRETEYCKYDNE) are Extracellular-facing. The chain crosses the membrane as a helical span at residues 83–103 (LLTLFTSSLYLAALFASFLAS). Topologically, residues 104–112 (TITRLFGRK) are cytoplasmic. A helical transmembrane segment spans residues 113 to 133 (VSMVIGSLAFLSGALLNGLAI). The Extracellular segment spans residues 134-137 (NLEM). A helical transmembrane segment spans residues 138 to 158 (LIIGRLFLGVGVGFANQSVPL). The Cytoplasmic segment spans residues 159 to 169 (YLSEMAPAKIR). The chain crosses the membrane as a helical span at residues 170–190 (GALNIGFQLAITIGILAANIV). Residues 191-204 (NYVTPKLQNGIGWR) are Extracellular-facing. A helical transmembrane segment spans residues 205–225 (LSLGLAGVPAVMMLVGCFFLP). Residues 226–290 (DTPNSILERG…RYRPQLTFCT (65 aa)) are Cytoplasmic-facing. Residues 291-311 (FIPFFQQLTGINVIMFYAPVL) form a helical membrane-spanning segment. The Extracellular segment spans residues 312–320 (FKTIGFGND). The chain crosses the membrane as a helical span at residues 321 to 341 (ASLISAVITGLVNVLSTIVSI). At 342 to 350 (YSVDKFGRR) the chain is on the cytoplasmic side. A helical transmembrane segment spans residues 351-371 (ALFLQGGFQMIVTQIAVGSMI). Topologically, residues 372–389 (GWKFGFNGEGNLSGVDAD) are extracellular. A helical membrane pass occupies residues 390 to 410 (IILALICLYVAGFAWSWGPLG). At 411–428 (WLVPSEICPLEIRSAGQS) the chain is on the cytoplasmic side. Residues 429 to 449 (LNVSVNMFFTFFIGQFFLTML) traverse the membrane as a helical segment. Residues 450–453 (CHMK) lie on the Extracellular side of the membrane. The chain crosses the membrane as a helical span at residues 454 to 474 (FGLFYFFAGMVLIMTIFIYFL). Over 475–514 (LPETKGVPIEEMGKVWKEHRYWGKYSNNDDGDDVDDDAYF) the chain is Cytoplasmic.

Belongs to the major facilitator superfamily. Sugar transporter (TC 2.A.1.1) family. As to expression, specifically expressed in germinating pollen and pollen tube (at protein level).

The protein resides in the cell membrane. Its activity is regulated as follows. Inhibited by uncouplers such as 2,4-dinitrophenol and carbonyl cyanide-m-chlorophenyl-hydrazone. In terms of biological role, mediates an active uptake of hexoses, probably by sugar/hydrogen symport. Can transport glucose, galactose, mannose, xylose and 3-O-methylglucose, but not fructose and ribose. The chain is Sugar transport protein 11 (STP11) from Arabidopsis thaliana (Mouse-ear cress).